The chain runs to 478 residues: Monocarboxylate transporter 2 (478 aa).

The Cytoplasmic segment spans residues 1–15 (MPPMPSAPPVHPPPD). Residues 16–36 (GGWGWIVVGAAFISIGFSYAF) form a helical membrane-spanning segment. Residues 37-59 (PKAVTVFFKEIQQIFHTTYSEIA) are Extracellular-facing. The helical transmembrane segment at 60–80 (WISSIMLAVMYAGGPVSSVLV) threads the bilayer. Residues 81 to 89 (NKYGSRPVV) lie on the Cytoplasmic side of the membrane. The helical transmembrane segment at 90 to 110 (IAGGLLCCLGMVLASFSSSVV) threads the bilayer. The Extracellular segment spans residues 111 to 115 (QLYLT). A helical membrane pass occupies residues 116–136 (MGFITGLGLAFNLQPALTIIG). Over 137 to 148 (KYFYRKRPMANG) the chain is Cytoplasmic. The helical transmembrane segment at 149–169 (LAMAGSPVFLSSLAPFNQYLF) threads the bilayer. The Extracellular portion of the chain corresponds to 170 to 173 (NTFG). The helical transmembrane segment at 174 to 194 (WKGSFLILGSLLLNACVAGSL) threads the bilayer. Topologically, residues 195 to 246 (MRPLGPNQTTSKSKNKTGKTEDDSSPKKIKTKKSTWEKVNKYLDFSLFKHRG) are cytoplasmic. The disordered stretch occupies residues 200–224 (PNQTTSKSKNKTGKTEDDSSPKKIK). The helical transmembrane segment at 247 to 267 (FLIYLSGNVIMFLGFFAPIIF) threads the bilayer. At 268–282 (LAPYAKDQGIDEYSA) the chain is on the extracellular side. Residues 283-303 (AFLLSVMAFVDMFARPSVGLI) form a helical membrane-spanning segment. Topologically, residues 304–312 (ANSKYIRPR) are cytoplasmic. Residues 313–333 (IQYFFSFAIMFNGVCHLLCPL) traverse the membrane as a helical segment. Residues 334-338 (AQDYT) lie on the Extracellular side of the membrane. Residues 339 to 359 (SLVLYAVFFGLGFGSVSSVLF) traverse the membrane as a helical segment. Residues 360–373 (ETLMDLVGAPRFSS) lie on the Cytoplasmic side of the membrane. A helical transmembrane segment spans residues 374–394 (AVGLVTIVECGPVLLGPPLAG). The Extracellular segment spans residues 395–406 (KLVDLTGEYKYM). The chain crosses the membrane as a helical span at residues 407 to 427 (YMSCGAIVVAASVWLLIGNAI). The Cytoplasmic segment spans residues 428–478 (NYRLLAKERKEENARQKTRESEPLSKSKHSEDVNVKVSNAQSVTSERETNI). Positions 437-461 (KEENARQKTRESEPLSKSKHSEDVN) are enriched in basic and acidic residues. Residues 437 to 478 (KEENARQKTRESEPLSKSKHSEDVNVKVSNAQSVTSERETNI) are disordered.

This sequence belongs to the major facilitator superfamily. Monocarboxylate porter (TC 2.A.1.13) family. As to quaternary structure, homodimer. Interacts with GRID2IP. Interacts with EMB; interaction mediates SLC16A7 targeting to the plasma membrane. Interacts with isoform 2 of BSG. As to expression, detected in heart and in blood lymphocytes and monocytes (at protein level). High expression in testis, moderate to low in spleen, heart, kidney, pancreas, skeletal muscle, brain and leukocyte. Restricted expression in normal tissues, but widely expressed in cancer cells.

It localises to the cell membrane. Its subcellular location is the basolateral cell membrane. It is found in the cytoplasm. It catalyses the reaction pyruvate(out) + H(+)(out) = pyruvate(in) + H(+)(in). The catalysed reaction is 3-methyl-2-oxobutanoate(out) + H(+)(out) = 3-methyl-2-oxobutanoate(in) + H(+)(in). It carries out the reaction (S)-lactate(in) + H(+)(in) = (S)-lactate(out) + H(+)(out). The enzyme catalyses acetoacetate(out) + H(+)(out) = acetoacetate(in) + H(+)(in). It catalyses the reaction (R)-3-hydroxybutanoate(out) + H(+)(out) = (R)-3-hydroxybutanoate(in) + H(+)(in). The catalysed reaction is 4-methyl-2-oxopentanoate(out) + H(+)(out) = 4-methyl-2-oxopentanoate(in) + H(+)(in). It carries out the reaction (S)-3-hydroxybutanoate(out) + H(+)(out) = (S)-3-hydroxybutanoate(in) + H(+)(in). With respect to regulation, transport activity exhibits steep dependence on substrate concentration. Substrate concentration sensitivity of SLC16A7 arises from the strong inter-subunit cooperativity of the SLC16A7 dimer during transport. Inhibited by AR-C155858. Functionally, proton-coupled monocarboxylate symporter. Catalyzes the rapid transport across the plasma membrane of monocarboxylates such as L-lactate, pyruvate and ketone bodies, acetoacetate, beta-hydroxybutyrate and acetate. Dimerization is functionally required and both subunits work cooperatively in transporting substrate. The polypeptide is Monocarboxylate transporter 2 (Homo sapiens (Human)).